Consider the following 367-residue polypeptide: UDP-N-acetylglucosamine--N-acetylmuramyl-(pentapeptide) pyrophosphoryl-undecaprenol N-acetylglucosamine transferase (367 aa).

UDP-N-acetyl-alpha-D-glucosamine-binding positions include 15 to 17, asparagine 127, arginine 163, serine 191, isoleucine 249, and glutamine 294; that span reads TGG.

Belongs to the glycosyltransferase 28 family. MurG subfamily.

It localises to the cell inner membrane. The enzyme catalyses di-trans,octa-cis-undecaprenyl diphospho-N-acetyl-alpha-D-muramoyl-L-alanyl-D-glutamyl-meso-2,6-diaminopimeloyl-D-alanyl-D-alanine + UDP-N-acetyl-alpha-D-glucosamine = di-trans,octa-cis-undecaprenyl diphospho-[N-acetyl-alpha-D-glucosaminyl-(1-&gt;4)]-N-acetyl-alpha-D-muramoyl-L-alanyl-D-glutamyl-meso-2,6-diaminopimeloyl-D-alanyl-D-alanine + UDP + H(+). It functions in the pathway cell wall biogenesis; peptidoglycan biosynthesis. Functionally, cell wall formation. Catalyzes the transfer of a GlcNAc subunit on undecaprenyl-pyrophosphoryl-MurNAc-pentapeptide (lipid intermediate I) to form undecaprenyl-pyrophosphoryl-MurNAc-(pentapeptide)GlcNAc (lipid intermediate II). The chain is UDP-N-acetylglucosamine--N-acetylmuramyl-(pentapeptide) pyrophosphoryl-undecaprenol N-acetylglucosamine transferase from Burkholderia pseudomallei (strain 668).